The primary structure comprises 278 residues: Protein EXORDIUM-like 4 (278 aa).

An N-terminal signal peptide occupies residues 1 to 23 (MAYNYRFAILLVLLSATVGFTAA). N-linked (GlcNAc...) asparagine glycosylation is present at Asn35.

This sequence belongs to the EXORDIUM family.

It localises to the secreted. The protein localises to the extracellular space. Its subcellular location is the apoplast. In terms of biological role, may play a role in a brassinosteroid-dependent regulation of growth and development. The sequence is that of Protein EXORDIUM-like 4 (EXL4) from Arabidopsis thaliana (Mouse-ear cress).